The following is a 467-amino-acid chain: Acetyl-CoA decarbonylase/synthase complex subunit beta (467 aa).

4 residues coordinate [Ni-Fe-S] cluster: C193, C196, C282, and C284. Residues 403–428 (RWAEEEEEEEEKAPEEEAPAEEPTME) are disordered. Over residues 405 to 426 (AEEEEEEEEKAPEEEAPAEEPT) the composition is skewed to acidic residues.

It belongs to the CdhC family. Monomer. The ACDS complex is made up of alpha, epsilon, beta, gamma and delta chains with a probable stoichiometry of (alpha(2)epsilon(2))(4)-beta(8)-(gamma(1)delta(1))(8). It depends on [Ni-Fe-S] cluster as a cofactor.

The enzyme catalyses Co(I)-[corrinoid Fe-S protein] + acetyl-CoA + H(+) = methyl-Co(III)-[corrinoid Fe-S protein] + CO + CoA. Part of a complex that catalyzes the reversible cleavage of acetyl-CoA, allowing autotrophic growth from CO(2). The alpha-epsilon complex generates CO from CO(2), while the beta subunit (this protein) combines the CO with CoA and a methyl group to form acetyl-CoA. The methyl group, which is incorporated into acetyl-CoA, is transferred to the beta subunit by a corrinoid iron-sulfur protein (the gamma-delta complex). The sequence is that of Acetyl-CoA decarbonylase/synthase complex subunit beta from Methanopyrus kandleri (strain AV19 / DSM 6324 / JCM 9639 / NBRC 100938).